A 377-amino-acid chain; its full sequence is uncharacterized protein (377 aa).

The next 2 helical transmembrane spans lie at 71 to 91 (IIATATSVPLTVGAYGILVGS) and 140 to 160 (AEAAITIATPIAVLYFVPTLF).

The protein localises to the membrane. This is an uncharacterized protein from Coxiella burnetii (strain RSA 493 / Nine Mile phase I).